Reading from the N-terminus, the 90-residue chain is Small ribosomal subunit protein uS17 (90 aa).

This sequence belongs to the universal ribosomal protein uS17 family. As to quaternary structure, part of the 30S ribosomal subunit.

In terms of biological role, one of the primary rRNA binding proteins, it binds specifically to the 5'-end of 16S ribosomal RNA. The sequence is that of Small ribosomal subunit protein uS17 from Burkholderia thailandensis (strain ATCC 700388 / DSM 13276 / CCUG 48851 / CIP 106301 / E264).